Consider the following 216-residue polypeptide: Endo-1,4-beta-xylanase 1 (216 aa).

Residues 1–19 (MFLTSVVSLVVGAISCVSA) form the signal peptide. The GH11 domain maps to 29 to 216 (QMTPRNSCYG…SSGSASITVS (188 aa)). E112 (nucleophile) is an active-site residue. Residue E203 is the Proton donor of the active site.

The protein belongs to the glycosyl hydrolase 11 (cellulase G) family.

Its subcellular location is the secreted. It carries out the reaction Endohydrolysis of (1-&gt;4)-beta-D-xylosidic linkages in xylans.. Its pathway is glycan degradation; xylan degradation. Endo-1,4-beta-xylanase involved in the hydrolysis of xylan, a major structural heterogeneous polysaccharide found in plant biomass representing the second most abundant polysaccharide in the biosphere, after cellulose. This is Endo-1,4-beta-xylanase 1 (xyl1) from Claviceps purpurea (Ergot fungus).